Reading from the N-terminus, the 676-residue chain is ATP-dependent zinc metalloprotease FTSH 2, chloroplastic (676 aa).

Residues 1–32 (MAPTSMSLAAKTPLPFSTLPSSGVAQRPVSVT) constitute a chloroplast transit peptide. Residues 155-175 (LLFNLIGNLAFPLILIGGLFL) traverse the membrane as a helical segment. 254–261 (GPPGTGKT) is an ATP binding site. Zn(2+) is bound at residue histidine 475. Glutamate 476 is an active-site residue. Histidine 479 and aspartate 553 together coordinate Zn(2+).

The protein in the N-terminal section; belongs to the AAA ATPase family. It in the C-terminal section; belongs to the peptidase M41 family. Requires Zn(2+) as cofactor.

The protein resides in the plastid. It localises to the chloroplast thylakoid membrane. Functionally, probable ATP-dependent zinc metallopeptidase. The protein is ATP-dependent zinc metalloprotease FTSH 2, chloroplastic (FTSH2) of Oryza sativa subsp. japonica (Rice).